Reading from the N-terminus, the 258-residue chain is UPF0758 protein BamMC406_2419 (258 aa).

Residues 13-42 form a disordered region; that stretch reads CRDPADAPAAPARHTGPARPRKRRPRNWKP. Over residues 31–42 the composition is skewed to basic residues; that stretch reads RPRKRRPRNWKP. The region spanning 136 to 258 is the MPN domain; the sequence is QIDSPGAVED…TFSFARAGWL (123 aa). The Zn(2+) site is built by His207, His209, and Asp220. Residues 207 to 220 carry the JAMM motif motif; the sequence is HNHPSGAVQPSAED.

The protein belongs to the UPF0758 family.

The chain is UPF0758 protein BamMC406_2419 from Burkholderia ambifaria (strain MC40-6).